The following is a 294-amino-acid chain: Proline iminopeptidase (294 aa).

Residues 27–277 (PPLVLLHGGP…GCGHMSFVEK (251 aa)) enclose the AB hydrolase-1 domain. Serine 105 acts as the Nucleophile in catalysis. Residue aspartate 244 is part of the active site. The Proton donor role is filled by histidine 271.

This sequence belongs to the peptidase S33 family.

Its subcellular location is the cell envelope. It catalyses the reaction Release of N-terminal proline from a peptide.. In terms of biological role, releases the N-terminal proline from various substrates. The chain is Proline iminopeptidase from Lactobacillus helveticus (strain DPC 4571).